A 158-amino-acid chain; its full sequence is C-type lection lectoxin-Enh3 (158 aa).

The first 23 residues, 1–23, serve as a signal peptide directing secretion; it reads MGQFTVVSLGLLAMFLSLSGAKG. 3 disulfide bridges follow: Cys-26–Cys-37, Cys-54–Cys-154, and Cys-129–Cys-146. One can recognise a C-type lectin domain in the interval 33–155; it reads RNGVCNKLFP…CASLHPFICQ (123 aa). The short motif at 119–121 is the Mannose-binding element; that stretch reads EPN. Glu-127, Asn-142, and Asp-143 together coordinate Ca(2+).

It belongs to the true venom lectin family. In terms of tissue distribution, expressed by the venom gland.

It is found in the secreted. Functionally, mannose-binding lectin which recognizes specific carbohydrate structures and agglutinates a variety of animal cells by binding to cell-surface glycoproteins and glycolipids. May be a calcium-dependent lectin. The chain is C-type lection lectoxin-Enh3 from Pseudoferania polylepis (Macleay's water snake).